A 125-amino-acid chain; its full sequence is MFATFGFIALFAVLGAWARYGQTLLVQAAFGRGFPWATLSINVLGCFLMGFLFFETLERISVSPELRTGMLTGGLGAYTTFSTFSLETLVLFENGEAVKGLLYMFTSLFLCVGAAFAGAWISHST.

A run of 4 helical transmembrane segments spans residues 1-21 (MFATFGFIALFAVLGAWARYG), 34-54 (FPWATLSINVLGCFLMGFLFF), 72-92 (TGGLGAYTTFSTFSLETLVLF), and 101-121 (LLYMFTSLFLCVGAAFAGAWI). Na(+)-binding residues include G76 and T79.

Belongs to the fluoride channel Fluc/FEX (TC 1.A.43) family.

It localises to the cell inner membrane. It carries out the reaction fluoride(in) = fluoride(out). With respect to regulation, na(+) is not transported, but it plays an essential structural role and its presence is essential for fluoride channel function. In terms of biological role, fluoride-specific ion channel. Important for reducing fluoride concentration in the cell, thus reducing its toxicity. This chain is Fluoride-specific ion channel FluC, found in Acidithiobacillus ferrooxidans (strain ATCC 23270 / DSM 14882 / CIP 104768 / NCIMB 8455) (Ferrobacillus ferrooxidans (strain ATCC 23270)).